Consider the following 252-residue polypeptide: 2-succinyl-6-hydroxy-2,4-cyclohexadiene-1-carboxylate synthase (252 aa).

This sequence belongs to the AB hydrolase superfamily. MenH family. In terms of assembly, monomer.

It catalyses the reaction 5-enolpyruvoyl-6-hydroxy-2-succinyl-cyclohex-3-ene-1-carboxylate = (1R,6R)-6-hydroxy-2-succinyl-cyclohexa-2,4-diene-1-carboxylate + pyruvate. The protein operates within quinol/quinone metabolism; 1,4-dihydroxy-2-naphthoate biosynthesis; 1,4-dihydroxy-2-naphthoate from chorismate: step 3/7. It participates in quinol/quinone metabolism; menaquinone biosynthesis. In terms of biological role, catalyzes a proton abstraction reaction that results in 2,5-elimination of pyruvate from 2-succinyl-5-enolpyruvyl-6-hydroxy-3-cyclohexene-1-carboxylate (SEPHCHC) and the formation of 2-succinyl-6-hydroxy-2,4-cyclohexadiene-1-carboxylate (SHCHC). The polypeptide is 2-succinyl-6-hydroxy-2,4-cyclohexadiene-1-carboxylate synthase (Escherichia coli (strain ATCC 8739 / DSM 1576 / NBRC 3972 / NCIMB 8545 / WDCM 00012 / Crooks)).